Here is a 359-residue protein sequence, read N- to C-terminus: Chorismate synthase (359 aa).

Position 47 (Arg47) interacts with NADP(+). FMN is bound by residues 123–125 (RSS), Gly283, 298–302 (KPTSS), and Arg326.

It belongs to the chorismate synthase family. In terms of assembly, homotetramer. Requires FMNH2 as cofactor.

It catalyses the reaction 5-O-(1-carboxyvinyl)-3-phosphoshikimate = chorismate + phosphate. It participates in metabolic intermediate biosynthesis; chorismate biosynthesis; chorismate from D-erythrose 4-phosphate and phosphoenolpyruvate: step 7/7. Functionally, catalyzes the anti-1,4-elimination of the C-3 phosphate and the C-6 proR hydrogen from 5-enolpyruvylshikimate-3-phosphate (EPSP) to yield chorismate, which is the branch point compound that serves as the starting substrate for the three terminal pathways of aromatic amino acid biosynthesis. This reaction introduces a second double bond into the aromatic ring system. The sequence is that of Chorismate synthase from Chlamydia caviae (strain ATCC VR-813 / DSM 19441 / 03DC25 / GPIC) (Chlamydophila caviae).